A 72-amino-acid chain; its full sequence is MREGIHPEYNHDVLVKCACGNTFTTGSTNKELKVEICSKCHPFFTGKQKIVDAGGRVDKFMKKFNLSNEDVK.

Residues cysteine 17, cysteine 19, cysteine 37, and cysteine 40 each coordinate Zn(2+).

Belongs to the bacterial ribosomal protein bL31 family. Type A subfamily. As to quaternary structure, part of the 50S ribosomal subunit. Zn(2+) serves as cofactor.

In terms of biological role, binds the 23S rRNA. The chain is Large ribosomal subunit protein bL31 from Clostridium botulinum (strain Loch Maree / Type A3).